Reading from the N-terminus, the 100-residue chain is Urease subunit gamma (100 aa).

It belongs to the urease gamma subunit family. Heterotrimer of UreA (gamma), UreB (beta) and UreC (alpha) subunits. Three heterotrimers associate to form the active enzyme.

The protein localises to the cytoplasm. It carries out the reaction urea + 2 H2O + H(+) = hydrogencarbonate + 2 NH4(+). It participates in nitrogen metabolism; urea degradation; CO(2) and NH(3) from urea (urease route): step 1/1. This Thioalkalivibrio sulfidiphilus (strain HL-EbGR7) protein is Urease subunit gamma.